The sequence spans 236 residues: 2,3,4,5-tetrahydropyridine-2,6-dicarboxylate N-acetyltransferase (236 aa).

It belongs to the transferase hexapeptide repeat family. DapH subfamily.

The catalysed reaction is (S)-2,3,4,5-tetrahydrodipicolinate + acetyl-CoA + H2O = L-2-acetamido-6-oxoheptanedioate + CoA. It participates in amino-acid biosynthesis; L-lysine biosynthesis via DAP pathway; LL-2,6-diaminopimelate from (S)-tetrahydrodipicolinate (acetylase route): step 1/3. Functionally, catalyzes the transfer of an acetyl group from acetyl-CoA to tetrahydrodipicolinate. This chain is 2,3,4,5-tetrahydropyridine-2,6-dicarboxylate N-acetyltransferase, found in Clostridium perfringens (strain ATCC 13124 / DSM 756 / JCM 1290 / NCIMB 6125 / NCTC 8237 / Type A).